The primary structure comprises 483 residues: Glutamyl-tRNA(Gln) amidotransferase subunit A (483 aa).

Residues Lys76 and Ser151 each act as charge relay system in the active site. Catalysis depends on Ser175, which acts as the Acyl-ester intermediate.

It belongs to the amidase family. GatA subfamily. In terms of assembly, heterotrimer of A, B and C subunits.

It carries out the reaction L-glutamyl-tRNA(Gln) + L-glutamine + ATP + H2O = L-glutaminyl-tRNA(Gln) + L-glutamate + ADP + phosphate + H(+). Its function is as follows. Allows the formation of correctly charged Gln-tRNA(Gln) through the transamidation of misacylated Glu-tRNA(Gln) in organisms which lack glutaminyl-tRNA synthetase. The reaction takes place in the presence of glutamine and ATP through an activated gamma-phospho-Glu-tRNA(Gln). The chain is Glutamyl-tRNA(Gln) amidotransferase subunit A from Azotobacter vinelandii (strain DJ / ATCC BAA-1303).